Consider the following 857-residue polypeptide: MEGFSDGYYDAQYTVPASDHRVEYPLSSSDHYAQAMMPFATPDQMHAAGFAYQSQIPDLVANSASFVFPSHTAGLSLNLPEHPMPAENLGDRTSNAMLLYDPLSALGGSTPTAINTGDPFAYNAFQSPFPAMSLENFQGQQSLSFHNTCLPSQPMNLNPSVAYSTMQTHGPILNTYQAPPRHAELTTSAKPTGTLDKQPSTNFPQPAGQTSQRRRNRGFQSSGPTPTHRFIQPKRPSPTKAPLPPHPKSAAGETSQYASIYSSSGFDIMGVLAEVVSRPNPKINIGAVDLSCAFVLCDITQNDHPIIYVSEAFERLTGYTEQEIVGQNCRFLQGPEGVVQKGMKRTFVDDETTSRLRSTIEDRTEIQASLINYRKGGQPFMNLITMIPIRWSSQEYRFYVGFQVDLVETPDAVTRRNPNGTYTINYQRSRLPNYVVPPPDLYRSHPDLTTWFTTDQVSTILKSLNNSTLTYRNYLDRVLVENTDDIIHALSLEGEFLYLSPSCRKVLEYEPIELVGKTLSTVCHPSDIGPVIRDLRACTTTDPVSVVFRIRKKYSGYIWFESHGSWRMGERGRQFMVLVGRPRFVYCLDHIASIGHGSLAETDVWAKLSKSGIVLFMTSKARPVLGRMPDELIGKSLQDLMDSRAEAQKALGVARTGQRVTFSHKIRHKKGHMLPAQTTLHPGDTKEGVRPSFLVAHISFPKPPQGGNDELNSAPPPNRNLAVSKIHRQAVSGVSGVAGQNMLASVKQANPQIQKLPFFTELVPTRGSSWQVELRELEKQNRTLSDELQKLLTRRKKRKRKQSTASVEKSCAICQTKKTPEWRRGPSGERDLCNSCGLRWAKQVRNAAQVAGRPNAY.

PAS domains are found at residues 306 to 328 (IIYV…VGQN), 479 to 542 (LVEN…TTTD), and 608 to 642 (LSKS…DLMD). The GATA-type zinc finger occupies 811–836 (CAICQTKKTPEWRRGPSGERDLCNSC).

Transcription factor that acts as a blue light sensor. Plays crucial roles in fungal growth and asexual development. Involved in conidiophore formation, sclerotium production, and conidial stress tolerance. Promotes conidiation by inducing the expression of brlA and abaA. Positively regulates the fungal pathogenicity towards maize. In blue light conditions, inhibits aflatoxin B1 (AFB1) biosynthesis by down-regulating the expression of key genes such as aflA, aflJ, aflH, aflO and aflK. The sequence is that of Blue light receptor lreA from Aspergillus flavus.